A 692-amino-acid polypeptide reads, in one-letter code: Small conductance calcium-activated potassium channel-like protein 3 (692 aa).

A helical membrane pass occupies residues Ser270–Glu290. The helical transmembrane segment at Thr313–Val333 threads the bilayer. A helical transmembrane segment spans residues Val349–Glu369. The helical transmembrane segment at Val401–His421 threads the bilayer. Residues Pro455–Val475 form a helical membrane-spanning segment. An intramembrane region (pore-forming) is located at residues Tyr492 to Val512. The helical transmembrane segment at Phe520–Ile540 threads the bilayer. The segment covering His667–Val683 has biased composition (polar residues). The segment at His667–Phe692 is disordered.

The protein belongs to the potassium channel KCNN family. SK subfamily. Heterooligomer.

It localises to the membrane. Forms a voltage-independent potassium channel activated by intracellular calcium. In Caenorhabditis elegans, this protein is Small conductance calcium-activated potassium channel-like protein 3 (kcnl-3).